A 98-amino-acid chain; its full sequence is Large ribosomal subunit protein bL28 (98 aa).

It belongs to the bacterial ribosomal protein bL28 family.

The polypeptide is Large ribosomal subunit protein bL28 (Mesorhizobium japonicum (strain LMG 29417 / CECT 9101 / MAFF 303099) (Mesorhizobium loti (strain MAFF 303099))).